Here is a 130-residue protein sequence, read N- to C-terminus: Large ribosomal subunit protein bL21 (130 aa).

The protein belongs to the bacterial ribosomal protein bL21 family. As to quaternary structure, part of the 50S ribosomal subunit. Contacts protein L20.

In terms of biological role, this protein binds to 23S rRNA in the presence of protein L20. The polypeptide is Large ribosomal subunit protein bL21 (Trichormus variabilis (strain ATCC 29413 / PCC 7937) (Anabaena variabilis)).